Here is a 68-residue protein sequence, read N- to C-terminus: Large ribosomal subunit protein bL35 (68 aa).

It belongs to the bacterial ribosomal protein bL35 family.

The chain is Large ribosomal subunit protein bL35 from Rickettsia typhi (strain ATCC VR-144 / Wilmington).